The primary structure comprises 97 residues: Aspartyl/glutamyl-tRNA(Asn/Gln) amidotransferase subunit C (97 aa).

The protein belongs to the GatC family. In terms of assembly, heterotrimer of A, B and C subunits.

It carries out the reaction L-glutamyl-tRNA(Gln) + L-glutamine + ATP + H2O = L-glutaminyl-tRNA(Gln) + L-glutamate + ADP + phosphate + H(+). The catalysed reaction is L-aspartyl-tRNA(Asn) + L-glutamine + ATP + H2O = L-asparaginyl-tRNA(Asn) + L-glutamate + ADP + phosphate + 2 H(+). Functionally, allows the formation of correctly charged Asn-tRNA(Asn) or Gln-tRNA(Gln) through the transamidation of misacylated Asp-tRNA(Asn) or Glu-tRNA(Gln) in organisms which lack either or both of asparaginyl-tRNA or glutaminyl-tRNA synthetases. The reaction takes place in the presence of glutamine and ATP through an activated phospho-Asp-tRNA(Asn) or phospho-Glu-tRNA(Gln). The sequence is that of Aspartyl/glutamyl-tRNA(Asn/Gln) amidotransferase subunit C from Parasynechococcus marenigrum (strain WH8102).